The primary structure comprises 182 residues: ATP-dependent protease subunit HslV (182 aa).

Residue Thr-10 is part of the active site. Ala-166, Cys-169, and Ser-172 together coordinate Na(+).

Belongs to the peptidase T1B family. HslV subfamily. As to quaternary structure, a double ring-shaped homohexamer of HslV is capped on each side by a ring-shaped HslU homohexamer. The assembly of the HslU/HslV complex is dependent on binding of ATP.

The protein localises to the cytoplasm. The catalysed reaction is ATP-dependent cleavage of peptide bonds with broad specificity.. With respect to regulation, allosterically activated by HslU binding. Protease subunit of a proteasome-like degradation complex believed to be a general protein degrading machinery. This is ATP-dependent protease subunit HslV from Rickettsia africae (strain ESF-5).